We begin with the raw amino-acid sequence, 118 residues long: MTSEVQVEVAMPIYFSDSAANKVKGLIAEEENPNMKLRVYVTGGGCSGFSYGFTFAETANEDDTKIENAGVTLLVDPMSLQYLVGGTVDYTNGLEGSRFFVNNPNATATCGCGSSFSM.

3 residues coordinate iron-sulfur cluster: Cys46, Cys110, and Cys112.

It belongs to the HesB/IscA family. Homodimer. Requires iron-sulfur cluster as cofactor.

Its function is as follows. Required for insertion of 4Fe-4S clusters for at least IspG. The sequence is that of Iron-sulfur cluster insertion protein ErpA from Psychromonas ingrahamii (strain DSM 17664 / CCUG 51855 / 37).